A 194-amino-acid chain; its full sequence is Molybdenum cofactor guanylyltransferase (194 aa).

Residues 12-14 (LAG), Lys25, Asn53, Asp70, and Asp100 each bind GTP. Asp100 is a binding site for Mg(2+).

It belongs to the MobA family. In terms of assembly, monomer. The cofactor is Mg(2+).

The protein resides in the cytoplasm. The enzyme catalyses Mo-molybdopterin + GTP + H(+) = Mo-molybdopterin guanine dinucleotide + diphosphate. Transfers a GMP moiety from GTP to Mo-molybdopterin (Mo-MPT) cofactor (Moco or molybdenum cofactor) to form Mo-molybdopterin guanine dinucleotide (Mo-MGD) cofactor. This is Molybdenum cofactor guanylyltransferase from Aliivibrio salmonicida (strain LFI1238) (Vibrio salmonicida (strain LFI1238)).